Here is a 234-residue protein sequence, read N- to C-terminus: Thymidylate kinase (234 aa).

21-28 provides a ligand contact to ATP; sequence GGEGTGKS.

It belongs to the thymidylate kinase family.

The enzyme catalyses dTMP + ATP = dTDP + ADP. In terms of biological role, phosphorylation of dTMP to form dTDP in both de novo and salvage pathways of dTTP synthesis. The protein is Thymidylate kinase of Rhizobium meliloti (strain 1021) (Ensifer meliloti).